A 475-amino-acid polypeptide reads, in one-letter code: Trifunctional enzyme subunit beta, mitochondrial (475 aa).

A mitochondrion-targeting transit peptide spans methionine 1–glutamine 34. At lysine 53 the chain carries N6-succinyllysine. An N6-acetyllysine; alternate modification is found at lysine 73. N6-succinyllysine; alternate is present on lysine 73. Cysteine 139 functions as the Acyl-thioester intermediate in the catalytic mechanism. Residues isoleucine 174–asparagine 221 lie within the membrane without spanning it. An N6-acetyllysine; alternate modification is found at lysine 189. N6-succinyllysine; alternate is present on lysine 189. N6-succinyllysine is present on residues lysine 191, lysine 273, and lysine 292. Lysine 294 is subject to N6-acetyllysine; alternate. Lysine 294 is subject to N6-succinyllysine; alternate. Lysine 299 carries the post-translational modification N6-acetyllysine. Position 333 is an N6-acetyllysine; alternate (lysine 333). Lysine 333 bears the N6-succinyllysine; alternate mark. N6-acetyllysine occurs at positions 349 and 362. The Proton donor/acceptor role is filled by cysteine 459.

Belongs to the thiolase-like superfamily. Thiolase family. Heterotetramer of 2 alpha/HADHA and 2 beta/HADHB subunits; forms the mitochondrial trifunctional enzyme. Also purified as higher order heterooligomers including a 4 alpha/HADHA and 4 beta/HADHB heterooligomer which physiological significance remains unclear. The mitochondrial trifunctional enzyme interacts with MTLN. Interacts with RSAD2/viperin.

It is found in the mitochondrion. The protein resides in the mitochondrion inner membrane. It localises to the mitochondrion outer membrane. Its subcellular location is the endoplasmic reticulum. It carries out the reaction an acyl-CoA + acetyl-CoA = a 3-oxoacyl-CoA + CoA. It catalyses the reaction butanoyl-CoA + acetyl-CoA = 3-oxohexanoyl-CoA + CoA. The enzyme catalyses hexanoyl-CoA + acetyl-CoA = 3-oxooctanoyl-CoA + CoA. The catalysed reaction is octanoyl-CoA + acetyl-CoA = 3-oxodecanoyl-CoA + CoA. It carries out the reaction decanoyl-CoA + acetyl-CoA = 3-oxododecanoyl-CoA + CoA. It catalyses the reaction dodecanoyl-CoA + acetyl-CoA = 3-oxotetradecanoyl-CoA + CoA. The enzyme catalyses tetradecanoyl-CoA + acetyl-CoA = 3-oxohexadecanoyl-CoA + CoA. The protein operates within lipid metabolism; fatty acid beta-oxidation. Functionally, mitochondrial trifunctional enzyme catalyzes the last three of the four reactions of the mitochondrial beta-oxidation pathway. The mitochondrial beta-oxidation pathway is the major energy-producing process in tissues and is performed through four consecutive reactions breaking down fatty acids into acetyl-CoA. Among the enzymes involved in this pathway, the trifunctional enzyme exhibits specificity for long-chain fatty acids. Mitochondrial trifunctional enzyme is a heterotetrameric complex composed of two proteins, the trifunctional enzyme subunit alpha/HADHA carries the 2,3-enoyl-CoA hydratase and the 3-hydroxyacyl-CoA dehydrogenase activities, while the trifunctional enzyme subunit beta/HADHB described here bears the 3-ketoacyl-CoA thiolase activity. The chain is Trifunctional enzyme subunit beta, mitochondrial (Hadhb) from Rattus norvegicus (Rat).